The primary structure comprises 525 residues: GMP synthase [glutamine-hydrolyzing] (525 aa).

Positions Arg7–Ser207 constitute a Glutamine amidotransferase type-1 domain. The Nucleophile role is filled by Cys84. Residues His181 and Glu183 contribute to the active site. One can recognise a GMPS ATP-PPase domain in the interval Trp208–Arg400. Residue Ser235 to Leu241 participates in ATP binding.

In terms of assembly, homodimer.

The enzyme catalyses XMP + L-glutamine + ATP + H2O = GMP + L-glutamate + AMP + diphosphate + 2 H(+). The protein operates within purine metabolism; GMP biosynthesis; GMP from XMP (L-Gln route): step 1/1. In terms of biological role, catalyzes the synthesis of GMP from XMP. In Blochmanniella pennsylvanica (strain BPEN), this protein is GMP synthase [glutamine-hydrolyzing].